A 60-amino-acid chain; its full sequence is Mastoparan-VB1 (60 aa).

Residues 1 to 23 form the signal peptide; the sequence is MKNTILLLFTAFIFLSGFFGMSA. A propeptide spanning residues 24–45 is cleaved from the precursor; that stretch reads EALADPKADPLAGPFPDADPDP. AXPX repeat units lie at residues 27 to 30, 31 to 34, 35 to 38, and 40 to 43; these read ADPK, ADPL, AGPF, and DADP. Leu59 is subject to Leucine amide.

Expressed by the venom gland.

The protein localises to the secreted. It localises to the target cell membrane. Its function is as follows. Antimicrobial peptide. Shows activity against both Gram-positive (S.aureus MIC=1.9-3.75 ug/ml) and -negative (E.coli MIC=15-60 ug/ml) bacteria, as well against fungi (C.albicans MIC=15 ug/ml). Also promotes moderate mast cell degranulation. Does not show hemolytic activity on rabbit and human erythrocytes. Its mast cell degranulation activity may be related to the activation of G-protein coupled receptors in mast cells as well as interaction with other proteins located in cell endosomal membranes in the mast cells. In Vespa bicolor (Black shield wasp), this protein is Mastoparan-VB1.